Consider the following 420-residue polypeptide: L-cysteine:1D-myo-inositol 2-amino-2-deoxy-alpha-D-glucopyranoside ligase (420 aa).

C48 provides a ligand contact to Zn(2+). L-cysteinyl-5'-AMP is bound by residues 48 to 51, T63, and 86 to 88; these read CGIT and NIT. The 'HIGH' region signature appears at 50–60; the sequence is ITPYDSTHLGH. Positions 192–197 match the 'ERGGDP' region motif; sequence ERGGDP. W232 is an L-cysteinyl-5'-AMP binding site. Residue C236 coordinates Zn(2+). 254–256 contacts L-cysteinyl-5'-AMP; the sequence is GSD. Residue H261 participates in Zn(2+) binding. I288 is an L-cysteinyl-5'-AMP binding site. A 'KMSKS' region motif is present at residues 294-298; that stretch reads KMSKS.

This sequence belongs to the class-I aminoacyl-tRNA synthetase family. MshC subfamily. As to quaternary structure, monomer. It depends on Zn(2+) as a cofactor.

It catalyses the reaction 1D-myo-inositol 2-amino-2-deoxy-alpha-D-glucopyranoside + L-cysteine + ATP = 1D-myo-inositol 2-(L-cysteinylamino)-2-deoxy-alpha-D-glucopyranoside + AMP + diphosphate + H(+). In terms of biological role, catalyzes the ATP-dependent condensation of GlcN-Ins and L-cysteine to form L-Cys-GlcN-Ins. In Corynebacterium glutamicum (strain R), this protein is L-cysteine:1D-myo-inositol 2-amino-2-deoxy-alpha-D-glucopyranoside ligase.